The sequence spans 213 residues: ATP phosphoribosyltransferase (213 aa).

It belongs to the ATP phosphoribosyltransferase family. Short subfamily. As to quaternary structure, heteromultimer composed of HisG and HisZ subunits.

It is found in the cytoplasm. The catalysed reaction is 1-(5-phospho-beta-D-ribosyl)-ATP + diphosphate = 5-phospho-alpha-D-ribose 1-diphosphate + ATP. The protein operates within amino-acid biosynthesis; L-histidine biosynthesis; L-histidine from 5-phospho-alpha-D-ribose 1-diphosphate: step 1/9. Its function is as follows. Catalyzes the condensation of ATP and 5-phosphoribose 1-diphosphate to form N'-(5'-phosphoribosyl)-ATP (PR-ATP). Has a crucial role in the pathway because the rate of histidine biosynthesis seems to be controlled primarily by regulation of HisG enzymatic activity. In Listeria welshimeri serovar 6b (strain ATCC 35897 / DSM 20650 / CCUG 15529 / CIP 8149 / NCTC 11857 / SLCC 5334 / V8), this protein is ATP phosphoribosyltransferase.